The primary structure comprises 145 residues: Basic phospholipase A2 cPm08 (145 aa).

The N-terminal stretch at 1–21 (MYPAHLLVLLAVCVSLLGASA) is a signal peptide. A propeptide spanning residues 22–27 (IPPLPL) is cleaved from the precursor. Cystine bridges form between C38/C98, C54/C144, C56/C72, C71/C125, C78/C118, C87/C111, and C105/C116. Ca(2+) is bound by residues Y55, G57, and G59. Residue H75 is part of the active site. Residue D76 coordinates Ca(2+). Residue D119 is part of the active site.

This sequence belongs to the phospholipase A2 family. Group I subfamily. D49 sub-subfamily. Ca(2+) serves as cofactor. Expressed by the venom gland.

Its subcellular location is the secreted. It carries out the reaction a 1,2-diacyl-sn-glycero-3-phosphocholine + H2O = a 1-acyl-sn-glycero-3-phosphocholine + a fatty acid + H(+). Its function is as follows. PLA2 catalyzes the calcium-dependent hydrolysis of the 2-acyl groups in 3-sn-phosphoglycerides. In Laticauda semifasciata (Black-banded sea krait), this protein is Basic phospholipase A2 cPm08.